Reading from the N-terminus, the 351-residue chain is Quinolinate phosphoribosyltransferase [decarboxylating] 2a, mitochondrial (351 aa).

Residues Arg142, 173–175 (TRK), Arg197, Lys207, Glu240, Asp267, 299–301 (SGN), and 320–322 (SGA) each bind substrate.

It belongs to the NadC/ModD family. As to expression, expressed in roots and flowers.

Its subcellular location is the mitochondrion. The catalysed reaction is nicotinate beta-D-ribonucleotide + CO2 + diphosphate = quinolinate + 5-phospho-alpha-D-ribose 1-diphosphate + 2 H(+). Its pathway is alkaloid biosynthesis; nicotine biosynthesis. The protein operates within cofactor biosynthesis; NAD(+) biosynthesis; nicotinate D-ribonucleotide from quinolinate: step 1/1. In terms of biological role, involved in the biosynthesis of pyridine alkaloid natural products, leading mainly to the production of anabasine, anatabine, nicotine and nornicotine, effective deterrents against herbivores with antiparasitic and pesticide properties (neurotoxins); nornicotine serves as the precursor in the synthesis of the carcinogen compound N'-nitrosonornicotine (NNN). Involved in the catabolism of quinolinic acid (QA). This chain is Quinolinate phosphoribosyltransferase [decarboxylating] 2a, mitochondrial, found in Nicotiana tabacum (Common tobacco).